A 535-amino-acid polypeptide reads, in one-letter code: Lecithin-cholesterol acyltransferase-like 4 (535 aa).

Ser2 bears the N-acetylserine mark. The active-site Acyl-ester intermediate is Ser182. Active-site charge relay system residues include Asp391 and His416. Positions 488–505 (STVNSISVSQPGDDQNPQ) are enriched in polar residues. The disordered stretch occupies residues 488 to 507 (STVNSISVSQPGDDQNPQAE).

This sequence belongs to the AB hydrolase superfamily. Lipase family.

The protein is Lecithin-cholesterol acyltransferase-like 4 (LCAT4) of Arabidopsis thaliana (Mouse-ear cress).